The chain runs to 148 residues: Transcriptional regulator MraZ (148 aa).

2 SpoVT-AbrB domains span residues 5–51 and 80–123; these read ATSL…PLPA and AEDV…SMEA.

The protein belongs to the MraZ family. Forms oligomers.

It localises to the cytoplasm. It is found in the nucleoid. The chain is Transcriptional regulator MraZ from Methylobacillus flagellatus (strain ATCC 51484 / DSM 6875 / VKM B-1610 / KT).